We begin with the raw amino-acid sequence, 198 residues long: Segregation and condensation protein B (198 aa).

The segment at 167-198 (PKLADPEADDPDQNEMDLFFDRFNQSKEQEEE) is disordered. The segment covering 172–181 (PEADDPDQNE) has biased composition (acidic residues).

Belongs to the ScpB family. In terms of assembly, homodimer. Homodimerization may be required to stabilize the binding of ScpA to the Smc head domains. Component of a cohesin-like complex composed of ScpA, ScpB and the Smc homodimer, in which ScpA and ScpB bind to the head domain of Smc. The presence of the three proteins is required for the association of the complex with DNA.

The protein resides in the cytoplasm. Its function is as follows. Participates in chromosomal partition during cell division. May act via the formation of a condensin-like complex containing Smc and ScpA that pull DNA away from mid-cell into both cell halves. In Listeria welshimeri serovar 6b (strain ATCC 35897 / DSM 20650 / CCUG 15529 / CIP 8149 / NCTC 11857 / SLCC 5334 / V8), this protein is Segregation and condensation protein B.